The following is a 286-amino-acid chain: Deaminated glutathione amidase (286 aa).

Positions Ala4–Thr252 constitute a CN hydrolase domain. Glu42 (proton acceptor) is an active-site residue. The active site involves Lys115. Cys157 serves as the catalytic Nucleophile.

Belongs to the carbon-nitrogen hydrolase superfamily. NIT1/NIT2 family.

The catalysed reaction is N-(4-oxoglutaryl)-L-cysteinylglycine + H2O = L-cysteinylglycine + 2-oxoglutarate. Hydrolyzes deaminated glutathione (dGSH, 2-oxoglutaramate) to alpha-ketoglutarate (alpha-KG) and cysteinylglycine (specific activity 6.50 umol/min/mg), has less activity against alpha-ketoglutaramate (a-KGM, specific activity 0.20 umol/min/mg), very little activity on glutathione and none on L-glutamine. May function as a metabolite repair enzyme. The protein is Deaminated glutathione amidase of Yersinia enterocolitica.